Here is a 52-residue protein sequence, read N- to C-terminus: Large ribosomal subunit protein bL33 (52 aa).

This sequence belongs to the bacterial ribosomal protein bL33 family.

This Anaeromyxobacter sp. (strain Fw109-5) protein is Large ribosomal subunit protein bL33.